The sequence spans 210 residues: Kinetochore protein Spc25 (210 aa).

A coiled-coil region spans residues 42-106 (TMENIKRQQH…KKKQERDKLI (65 aa)).

The protein belongs to the SPC25 family. In terms of assembly, component of the Ndc80 complex, which is composed of Ndc80, Nuf2 and Spc25.

It is found in the nucleus. It localises to the chromosome. The protein resides in the centromere. Its subcellular location is the kinetochore. Functionally, acts as a component of the essential kinetochore-associated Ndc80 complex, which is required for chromosome segregation and spindle checkpoint activity during meiosis and mitosis. Required for kinetochore integrity and the organization of stable microtubule binding sites in the outer plate of the kinetochore. Participates in SAC signaling that responds specifically to disruptions in spindle microtubule dynamics. The NDC80 complex synergistically enhances the affinity of the SKA1 complex for microtubules and may allow the NDC80 complex to track depolymerizing microtubules. This chain is Kinetochore protein Spc25, found in Drosophila virilis (Fruit fly).